The sequence spans 280 residues: Formyltetrahydrofolate deformylase (280 aa).

An ACT domain is found at 8–86 (VLRTICPDQK…RELNPAGRRR (79 aa)). Asp-225 is an active-site residue.

The protein belongs to the PurU family. In terms of assembly, homohexamer.

The catalysed reaction is (6R)-10-formyltetrahydrofolate + H2O = (6S)-5,6,7,8-tetrahydrofolate + formate + H(+). It functions in the pathway purine metabolism; IMP biosynthesis via de novo pathway; formate from 10-formyl-5,6,7,8-tetrahydrofolate: step 1/1. With respect to regulation, activated by methionine, inhibited by glycine. Catalyzes the hydrolysis of 10-formyltetrahydrofolate (formyl-FH4) to formate and tetrahydrofolate (FH4). Provides the major source of formate for the PurT-dependent synthesis of 5'-phosphoribosyl-N-formylglycinamide (FGAR) during aerobic growth. Has a role in regulating the one-carbon pool. The chain is Formyltetrahydrofolate deformylase from Escherichia coli (strain K12).